The sequence spans 158 residues: Ribosome maturation factor RimP (158 aa).

The protein belongs to the RimP family.

The protein localises to the cytoplasm. Its function is as follows. Required for maturation of 30S ribosomal subunits. In Streptococcus suis (strain 05ZYH33), this protein is Ribosome maturation factor RimP.